Reading from the N-terminus, the 131-residue chain is Small ribosomal subunit protein uS8 (131 aa).

It belongs to the universal ribosomal protein uS8 family. As to quaternary structure, part of the 30S ribosomal subunit. Contacts proteins S5 and S12.

In terms of biological role, one of the primary rRNA binding proteins, it binds directly to 16S rRNA central domain where it helps coordinate assembly of the platform of the 30S subunit. This is Small ribosomal subunit protein uS8 from Nitrosomonas europaea (strain ATCC 19718 / CIP 103999 / KCTC 2705 / NBRC 14298).